Consider the following 339-residue polypeptide: Undecaprenyl-phosphate 4-deoxy-4-formamido-L-arabinose transferase (339 aa).

The next 2 membrane-spanning stretches (helical) occupy residues 235-255 (LSLV…FLLV) and 269-289 (LFVL…GMGL).

This sequence belongs to the glycosyltransferase 2 family.

The protein localises to the cell inner membrane. The enzyme catalyses UDP-4-deoxy-4-formamido-beta-L-arabinose + di-trans,octa-cis-undecaprenyl phosphate = 4-deoxy-4-formamido-alpha-L-arabinopyranosyl di-trans,octa-cis-undecaprenyl phosphate + UDP. It participates in glycolipid biosynthesis; 4-amino-4-deoxy-alpha-L-arabinose undecaprenyl phosphate biosynthesis; 4-amino-4-deoxy-alpha-L-arabinose undecaprenyl phosphate from UDP-4-deoxy-4-formamido-beta-L-arabinose and undecaprenyl phosphate: step 1/2. The protein operates within bacterial outer membrane biogenesis; lipopolysaccharide biosynthesis. In terms of biological role, catalyzes the transfer of 4-deoxy-4-formamido-L-arabinose from UDP to undecaprenyl phosphate. The modified arabinose is attached to lipid A and is required for resistance to polymyxin and cationic antimicrobial peptides. The chain is Undecaprenyl-phosphate 4-deoxy-4-formamido-L-arabinose transferase from Pseudomonas aeruginosa (strain UCBPP-PA14).